The chain runs to 621 residues: Cyclic nucleotide-gated ion channel 11 (621 aa).

Topologically, residues 1-43 (MNLQRRKFVRLDSTGVDGKLKSVRGRLKKVYGKMKTLENWRKT) are cytoplasmic. A helical membrane pass occupies residues 44-64 (VLLACVVALAIDPLFLFIPLI). At 65–76 (DSQRFCFTFDKT) the chain is on the extracellular side. The helical transmembrane segment at 77 to 97 (LVAVVCVIRTFIDTFYVIHII) threads the bilayer. At 98–128 (YYLITETIAPRSQASLRGEIVVHSKATLKTR) the chain is on the cytoplasmic side. A helical transmembrane segment spans residues 129 to 149 (LLFHFIVDIISVLPIPQVVVL). At 150 to 162 (TLIPLSASLVSER) the chain is on the extracellular side. A helical membrane pass occupies residues 163–183 (ILKWIILSQYVPRIIRMYPLY). Topologically, residues 184–198 (KEVTRAFGTVAESKR) are cytoplasmic. The chain crosses the membrane as a helical span at residues 199–219 (VGAALNFFLYMLHSYVCGAFW). Over 220–329 (YLSSIERKST…QNLETSNSAG (110 aa)) the chain is Extracellular. The helical transmembrane segment at 330 to 350 (EIFFAIIICVSGLLLFAVLIG) threads the bilayer. The Cytoplasmic segment spans residues 351 to 621 (NVQKYLQSST…KLNLGAAIYA (271 aa)). A nucleoside 3',5'-cyclic phosphate-binding positions include 435-556 (LLQA…HSKQ) and Asp-506. Positions 549-564 (YRRLHSKQLQHMFRFY) are calmodulin-binding. Residues 569 to 598 (QTWAACFIQAAWKRHCRRKLSKALREEEGK) form the IQ domain.

This sequence belongs to the cyclic nucleotide-gated cation channel (TC 1.A.1.5) family. In terms of assembly, homotetramer or heterotetramer.

The protein resides in the cell membrane. Its function is as follows. Putative cyclic nucleotide-gated ion channel. The polypeptide is Cyclic nucleotide-gated ion channel 11 (CNGC11) (Arabidopsis thaliana (Mouse-ear cress)).